The primary structure comprises 1549 residues: ATP-binding cassette sub-family C member 9 (1549 aa).

Over 1–30 the chain is Extracellular; the sequence is MSLSFCGNNISSYNINDGVLQNSCFVDALN. An N-linked (GlcNAc...) asparagine glycan is attached at Asn-9. A helical membrane pass occupies residues 31–51; the sequence is LVPHVFLLFITFPILFIGWGS. The Cytoplasmic portion of the chain corresponds to 52 to 72; it reads QSSKVQIHHNTWLHFPGHNLR. The chain crosses the membrane as a helical span at residues 73–93; it reads WILTFALLFVHVCEIAEGIVS. Over 94 to 101 the chain is Extracellular; the sequence is DSRRESRH. Residues 102 to 122 traverse the membrane as a helical segment; that stretch reads LHLFMPAVMGFVATTTSIVYY. Residues 123–132 are Cytoplasmic-facing; it reads HNIETSNFPK. The helical transmembrane segment at 133–153 threads the bilayer; sequence LLLALFLYWVMAFITKTIKLV. At 154–167 the chain is on the extracellular side; sequence KYCQSGLDISNLRF. Residues 168-188 form a helical membrane-spanning segment; sequence CITGMMVILNGLLMAVEINVI. Residues 189–301 lie on the Cytoplasmic side of the membrane; that stretch reads RVRRYVFFMN…AFGRPILLSS (113 aa). In terms of domain architecture, ABC transmembrane type-1 1 spans 297 to 597; that stretch reads ILLSSTFRYL…LSTVVRFAVK (301 aa). Residues 302–322 form a helical membrane-spanning segment; that stretch reads TFRYLADLLGFAGPLCISGIV. The Extracellular segment spans residues 323-350; that stretch reads QRVNETQNGTNNTTGISETLSSKEFLEN. Asn-326, Asn-330, Asn-333, and Asn-334 each carry an N-linked (GlcNAc...) asparagine glycan. The helical transmembrane segment at 351 to 371 threads the bilayer; it reads AYVLAVLLFLALILQRTFLQA. The Cytoplasmic segment spans residues 372 to 423; that stretch reads SYYVTIETGINLRGALLAMIYNKILRLSTSNLSMGEMTLGQINNLVAIETNQ. Residues 424–444 traverse the membrane as a helical segment; it reads LMWFLFLCPNLWAMPVQIIMG. The Extracellular segment spans residues 445–455; the sequence is VILLYNLLGSS. The chain crosses the membrane as a helical span at residues 456 to 476; that stretch reads ALVGAAVIVLLAPIQYFIATK. At 477 to 531 the chain is on the cytoplasmic side; sequence LAEAQKSTLDYSTERLKKTNEILKGIKLLKLYAWEHIFCKSVEETRMKELSSLKT. A helical transmembrane segment spans residues 532 to 552; it reads FALYTSLSIFMNAAIPIAAVL. Topologically, residues 553–571 are extracellular; it reads ATFVTHAYASGNNLKPAEA. A helical membrane pass occupies residues 572 to 592; that stretch reads FASLSLFHILVTPLFLLSTVV. The Cytoplasmic portion of the chain corresponds to 593–990; that stretch reads RFAVKAIISV…TCWRYLTSGG (398 aa). The region spanning 672-912 is the ABC transporter 1 domain; it reads IKVTNGYFSW…DVELYEHWKT (241 aa). 705–712 contributes to the ATP binding site; the sequence is GQVGCGKS. The tract at residues 944-967 is disordered; it reads REAKAQMEDEDEEEEEEEDEDDNM. Residues 951–966 are compositionally biased toward acidic residues; that stretch reads EDEDEEEEEEEDEDDN. The helical transmembrane segment at 991–1011 threads the bilayer; it reads FFLLILMIFSKLLKHSVIVAI. In terms of domain architecture, ABC transmembrane type-1 2 spans 994–1274; the sequence is LILMIFSKLL…VVRNLADLEV (281 aa). Topologically, residues 1012-1034 are extracellular; that stretch reads DYWLATWTSEYSINNTGKADQTY. The helical transmembrane segment at 1035–1055 threads the bilayer; the sequence is YVAGFSILCGAGIFLCLVTSL. Over 1056–1127 the chain is Cytoplasmic; the sequence is TVEWMGLTAA…TLLCLSAIGM (72 aa). A helical transmembrane segment spans residues 1128–1148; it reads ISYATPVFLVALLPLGVAFYF. The Extracellular segment spans residues 1149 to 1245; that stretch reads IQKYFRVASK…IASISGSSNS (97 aa). The chain crosses the membrane as a helical span at residues 1246–1266; sequence GLVGLGLLYALTITNYLNWVV. Residues 1267–1549 are Cytoplasmic-facing; sequence RNLADLEVQM…LFSTLVMTNK (283 aa). In terms of domain architecture, ABC transporter 2 spans 1312 to 1546; the sequence is IKIHDLCVRY…KNGLFSTLVM (235 aa). 1346–1353 serves as a coordination point for ATP; it reads GRTGSGKS.

The protein belongs to the ABC transporter superfamily. ABCC family. Conjugate transporter (TC 3.A.1.208) subfamily. As to quaternary structure, interacts with KCNJ11. Interacts with KCNJ8.

The protein resides in the membrane. Its function is as follows. Subunit of ATP-sensitive potassium channels (KATP). Can form cardiac and smooth muscle-type KATP channels with KCNJ11. KCNJ11 forms the channel pore while ABCC9 is required for activation and regulation. Can form a sulfonylurea-sensitive but ATP-insensitive potassium channel with KCNJ8. The polypeptide is ATP-binding cassette sub-family C member 9 (ABCC9) (Homo sapiens (Human)).